The chain runs to 154 residues: Myoglobin (154 aa).

The 147-residue stretch at 2–148 (GLSEAEWQLV…FRKDIAAKYK (147 aa)) folds into the Globin domain. Phosphoserine is present on Ser-4. His-65 lines the nitrite pocket. O2 is bound at residue His-65. Residue Thr-68 is modified to Phosphothreonine. Residue His-94 coordinates heme b.

It belongs to the globin family. As to quaternary structure, monomeric.

Its subcellular location is the cytoplasm. The protein localises to the sarcoplasm. The enzyme catalyses Fe(III)-heme b-[protein] + nitric oxide + H2O = Fe(II)-heme b-[protein] + nitrite + 2 H(+). The catalysed reaction is H2O2 + AH2 = A + 2 H2O. Monomeric heme protein which primary function is to store oxygen and facilitate its diffusion within muscle tissues. Reversibly binds oxygen through a pentacoordinated heme iron and enables its timely and efficient release as needed during periods of heightened demand. Depending on the oxidative conditions of tissues and cells, and in addition to its ability to bind oxygen, it also has a nitrite reductase activity whereby it regulates the production of bioactive nitric oxide. Under stress conditions, like hypoxia and anoxia, it also protects cells against reactive oxygen species thanks to its pseudoperoxidase activity. The sequence is that of Myoglobin (MB) from Mesoplodon carlhubbsi (Hubb's beaked whale).